The primary structure comprises 321 residues: Transaldolase (321 aa).

The Schiff-base intermediate with substrate role is filled by K132.

It belongs to the transaldolase family. Type 1 subfamily. In terms of assembly, homodimer.

It is found in the cytoplasm. It carries out the reaction D-sedoheptulose 7-phosphate + D-glyceraldehyde 3-phosphate = D-erythrose 4-phosphate + beta-D-fructose 6-phosphate. It participates in carbohydrate degradation; pentose phosphate pathway; D-glyceraldehyde 3-phosphate and beta-D-fructose 6-phosphate from D-ribose 5-phosphate and D-xylulose 5-phosphate (non-oxidative stage): step 2/3. Functionally, transaldolase is important for the balance of metabolites in the pentose-phosphate pathway. The sequence is that of Transaldolase from Rhizobium etli (strain CIAT 652).